We begin with the raw amino-acid sequence, 247 residues long: Triosephosphate isomerase (247 aa).

Residues Asn-10 and Lys-12 each contribute to the substrate site. His-94 serves as the catalytic Electrophile. The active-site Proton acceptor is Glu-164.

Belongs to the triosephosphate isomerase family. Homodimer.

The enzyme catalyses D-glyceraldehyde 3-phosphate = dihydroxyacetone phosphate. The protein operates within carbohydrate biosynthesis; gluconeogenesis. It functions in the pathway carbohydrate degradation; glycolysis; D-glyceraldehyde 3-phosphate from glycerone phosphate: step 1/1. The protein is Triosephosphate isomerase (Tpi) of Drosophila melanogaster (Fruit fly).